Consider the following 456-residue polypeptide: Trigger factor (456 aa).

A PPIase FKBP-type domain is found at 192-277 (GDTVVIDFVG…IHEVKTKEVP (86 aa)).

The protein belongs to the FKBP-type PPIase family. Tig subfamily.

It localises to the cytoplasm. The enzyme catalyses [protein]-peptidylproline (omega=180) = [protein]-peptidylproline (omega=0). Involved in protein export. Acts as a chaperone by maintaining the newly synthesized protein in an open conformation. Functions as a peptidyl-prolyl cis-trans isomerase. This Streptococcus pyogenes serotype M4 (strain MGAS10750) protein is Trigger factor.